The primary structure comprises 309 residues: Methionyl-tRNA formyltransferase (309 aa).

Residue 110–113 (SLLP) participates in (6S)-5,6,7,8-tetrahydrofolate binding.

It belongs to the Fmt family.

The enzyme catalyses L-methionyl-tRNA(fMet) + (6R)-10-formyltetrahydrofolate = N-formyl-L-methionyl-tRNA(fMet) + (6S)-5,6,7,8-tetrahydrofolate + H(+). Attaches a formyl group to the free amino group of methionyl-tRNA(fMet). The formyl group appears to play a dual role in the initiator identity of N-formylmethionyl-tRNA by promoting its recognition by IF2 and preventing the misappropriation of this tRNA by the elongation apparatus. In Caldanaerobacter subterraneus subsp. tengcongensis (strain DSM 15242 / JCM 11007 / NBRC 100824 / MB4) (Thermoanaerobacter tengcongensis), this protein is Methionyl-tRNA formyltransferase.